The following is a 558-amino-acid chain: Inositol-3-phosphate synthase (558 aa).

The segment at 1–34 (MSPTALDACDHHDSFSLPAQDQSKVHPSARRTPE) is disordered. Positions 99, 100, 101, 102, 174, 210, 211, 221, 224, 262, 263, 264, 265, 313, 314, 338, 341, 372, 373, 374, 387, 439, 440, 468, and 469 each coordinate NAD(+).

Belongs to the myo-inositol 1-phosphate synthase family. In terms of assembly, homotetramer. It depends on NAD(+) as a cofactor.

It localises to the cytoplasm. The catalysed reaction is D-glucose 6-phosphate = 1D-myo-inositol 3-phosphate. It participates in polyol metabolism; myo-inositol biosynthesis; myo-inositol from D-glucose 6-phosphate: step 1/2. In terms of biological role, key enzyme in myo-inositol biosynthesis pathway that catalyzes the conversion of glucose 6-phosphate to 1-myo-inositol 1-phosphate in a NAD-dependent manner. Rate-limiting enzyme in the synthesis of all inositol-containing compounds. The protein is Inositol-3-phosphate synthase of Cryptococcus neoformans var. grubii serotype A (strain H99 / ATCC 208821 / CBS 10515 / FGSC 9487) (Filobasidiella neoformans var. grubii).